We begin with the raw amino-acid sequence, 278 residues long: Beta-lactamase-like protein str5 (278 aa).

The chain crosses the membrane as a helical span at residues 20–37; sequence VFVLAALLSATFAFFTHT. A glycan (N-linked (GlcNAc...) asparagine) is linked at N112.

The protein belongs to the beta-lactamase family.

It localises to the membrane. It functions in the pathway mycotoxin biosynthesis. Functionally, beta-lactamase-like protein; part of the gene cluster that mediates the biosynthesis of strobilurin A, an antifungal polyketide that contains a key beta-methoxyacrylate toxophore that targets the complex III of the mitochondrial electron transport chain. Strobilurin biosynthesis begins with construction of benzoyl CoA by step-wise elimination of ammonia from phenylalanine by the phenylalanine ammonia-lyase str11, oxygenation by str8 and retro-Claisen reaction to form benzoic acid, which is activated to its CoA thiolester benzoyl CoA by the dedicated CoA ligase str10. Benzoyl CoA forms the starter unit for the highly reducing polyketide synthase stpks1 that produces the polyketide prestrobilutin A. The FAD-dependent oxygenase str9 then catalyzes the key oxidative rearrangement responsible for the creation of the beta-methoxyacrylate toxophore. Str9 performs epoxidation of the 2,3 olefin of prestrobilutin A, followed by Meinwald rearrangement to furnish the aldehyde intermediate. Rapid enolization of the aldehyde intermediate would give the beta-methoxyacrylate skeleton and methylations catalyzed by str2 and str3 complete the synthesis and lead to the production of strobilurin A. The short-chain dehydrogenase stl2 and the dehydrogenase str4 play a role in the shunt pathway leading to the production of bolineol. The cluster encodes no obvious halogenase gene that could be involved in production of strobilurin B, nor any obvious dimethylallyl-transferase that could be involved in the production of strobilurin G. It is possible that unknown proteins encoded in, or near, the cluster (such as str1 or stl1) may form new classes of halogenases or dimethylally-transferases, or that the responsible genes are located elsewhere on the genome. Similarly, proteins encoded by str5/str6 hydrolases appear to have no chemical role in the biosynthesis of strobilurin A. Finally, no obvious self-resistance gene is found within the cluster. The sequence is that of Beta-lactamase-like protein str5 from Strobilurus tenacellus.